The following is a 141-amino-acid chain: MSNKKIIKIIKLQIPGGKANPAPPIGPALGAAGVNIMGFCKEFNAATQDRPGDLLPVVITVYSDKTFSFVMKQSPVSSLIKKALGLESGSKIPNRNKVGKLTRAQITAIAEQKMKDMDVVLLESAERMVEGTARSMGVDVE.

The protein belongs to the universal ribosomal protein uL11 family. As to quaternary structure, part of the ribosomal stalk of the 50S ribosomal subunit. Interacts with L10 and the large rRNA to form the base of the stalk. L10 forms an elongated spine to which L12 dimers bind in a sequential fashion forming a multimeric L10(L12)X complex. One or more lysine residues are methylated.

In terms of biological role, forms part of the ribosomal stalk which helps the ribosome interact with GTP-bound translation factors. This chain is Large ribosomal subunit protein uL11, found in Chlamydia trachomatis serovar L2 (strain ATCC VR-902B / DSM 19102 / 434/Bu).